The primary structure comprises 264 residues: uncharacterized protein (264 aa).

4 helical membrane passes run V43–I63, F68–I88, I96–I116, and L150–V170. Residues S216 to T247 are disordered. The segment covering S224 to P237 has biased composition (low complexity).

The protein resides in the membrane. This is an uncharacterized protein from Caenorhabditis elegans.